The chain runs to 451 residues: Bacteriochlorophyllide d C-8(2)-methyltransferase (451 aa).

The 118-residue stretch at 1-118 folds into the B12-binding domain; sequence MDDDSNQKPL…DDVANNRLKE (118 aa). A Radical SAM core domain is found at 148–377; the sequence is VDGTKSIPIY…ALHLVIKSDR (230 aa). 3 residues coordinate [4Fe-4S] cluster: cysteine 162, cysteine 166, and cysteine 169.

Belongs to the radical SAM superfamily. [4Fe-4S] cluster serves as cofactor.

The protein resides in the cytoplasm. It carries out the reaction 8,12-diethyl-3-vinylbacteriochlorophyllide d + S-adenosyl-L-methionine = 12-ethyl-8-propyl-3-vinylbacteriochlorophyllide d + S-adenosyl-L-homocysteine + H(+). The catalysed reaction is 12-ethyl-8-propyl-3-vinylbacteriochlorophyllide d + S-adenosyl-L-methionine = 12-ethyl-8-isobutyl-3-vinylbacteriochlorophyllide d + S-adenosyl-L-homocysteine + H(+). Its pathway is porphyrin-containing compound metabolism; bacteriochlorophyll biosynthesis (light-independent). Functionally, involved in the biosynthesis of the major light-harvesting pigment bacteriochlorophyll c (BChlc), which confers a significant competitive advantage to green sulfur bacteria living at limiting red and near-infrared light intensities. BchQ is a methyltransferase that adds two consecutive methyl groups to the ethyl carbon at the C-8(2) position of 8,12-diethyl-3-vinylbacteriochlorophyllide d to yield 12-ethyl-8-isobutyl-3-vinylbacteriochlorophyllide d. In Chlorobaculum tepidum (strain ATCC 49652 / DSM 12025 / NBRC 103806 / TLS) (Chlorobium tepidum), this protein is Bacteriochlorophyllide d C-8(2)-methyltransferase.